A 25-amino-acid chain; its full sequence is Neuromedin-U-25 (25 aa).

Position 25 is an asparagine amide (Asn-25).

The protein belongs to the NmU family.

Its subcellular location is the secreted. Functionally, stimulates uterine smooth muscle contraction and causes selective vasoconstriction. The chain is Neuromedin-U-25 (NMU) from Oryctolagus cuniculus (Rabbit).